The sequence spans 69 residues: Conotoxin Fr3.1 (69 aa).

The first 20 residues, 1 to 20, serve as a signal peptide directing secretion; that stretch reads MLKTGVLLLIFLVLFPLATL. Residues 21 to 51 constitute a propeptide that is removed on maturation; the sequence is QDADQPVERNVENKQDLNLDKRRGMKLLAQR. The residue at position 52 (Gln52) is a Pyrrolidone carboxylic acid. Position 54 is a 4-carboxyglutamate (Glu54). The residue at position 58 (Pro58) is a 4-hydroxyproline.

This sequence belongs to the conotoxin M superfamily. Expressed by the venom duct.

It is found in the secreted. Its function is as follows. Probable toxin. This chain is Conotoxin Fr3.1, found in Conus frigidus (Frigid cone).